Here is a 40-residue protein sequence, read N- to C-terminus: 67 kDa serum albumin (40 aa).

One can recognise an Albumin domain in the interval 1-40 (DAEHKSEIVHRFNDLKEEKFKGAALITFAQFLHKKPEEEA). His4 provides a ligand contact to Cu cation.

The protein belongs to the ALB/AFP/VDB family. As to expression, plasma.

Its subcellular location is the secreted. Serum albumin, the main protein of plasma, has a good binding capacity for water, Ca(2+), Na(+), K(+), fatty acids, hormones, bilirubin and drugs. Its main function is the regulation of the colloidal osmotic pressure of blood. This is 67 kDa serum albumin from Trachemys scripta (Red-eared slider turtle).